The sequence spans 310 residues: Small ribosomal subunit biogenesis GTPase RsgA (310 aa).

Positions 77–236 (KNELKRPNIA…IADTPGFSKL (160 aa)) constitute a CP-type G domain. GTP-binding positions include 126–129 (SKID) and 179–187 (GQTGVGKST). Zn(2+)-binding residues include Cys-260, Cys-266, His-268, and Cys-274.

It belongs to the TRAFAC class YlqF/YawG GTPase family. RsgA subfamily. Monomer. Associates with 30S ribosomal subunit, binds 16S rRNA. The cofactor is Zn(2+).

The protein localises to the cytoplasm. Its function is as follows. One of several proteins that assist in the late maturation steps of the functional core of the 30S ribosomal subunit. Helps release RbfA from mature subunits. May play a role in the assembly of ribosomal proteins into the subunit. Circularly permuted GTPase that catalyzes slow GTP hydrolysis, GTPase activity is stimulated by the 30S ribosomal subunit. This chain is Small ribosomal subunit biogenesis GTPase RsgA, found in Phytoplasma australiense.